A 123-amino-acid chain; its full sequence is Ribosome-binding factor A (123 aa).

This sequence belongs to the RbfA family. In terms of assembly, monomer. Binds 30S ribosomal subunits, but not 50S ribosomal subunits or 70S ribosomes.

The protein resides in the cytoplasm. In terms of biological role, one of several proteins that assist in the late maturation steps of the functional core of the 30S ribosomal subunit. Associates with free 30S ribosomal subunits (but not with 30S subunits that are part of 70S ribosomes or polysomes). Required for efficient processing of 16S rRNA. May interact with the 5'-terminal helix region of 16S rRNA. The protein is Ribosome-binding factor A of Legionella pneumophila (strain Lens).